The sequence spans 269 residues: tRNA pseudouridine synthase A (269 aa).

D51 (nucleophile) is an active-site residue. Residue Y109 coordinates substrate.

Belongs to the tRNA pseudouridine synthase TruA family. Homodimer.

The catalysed reaction is uridine(38/39/40) in tRNA = pseudouridine(38/39/40) in tRNA. Formation of pseudouridine at positions 38, 39 and 40 in the anticodon stem and loop of transfer RNAs. This chain is tRNA pseudouridine synthase A, found in Haemophilus influenzae (strain PittGG).